A 106-amino-acid polypeptide reads, in one-letter code: ATP synthase-coupling factor 6, mitochondrial (106 aa).

This sequence belongs to the eukaryotic ATPase subunit F6 family. As to quaternary structure, F-type ATPases have 2 components, CF(1) - the catalytic core - and CF(0) - the membrane proton channel. CF(0) seems to have nine subunits: a, b, c, d, e, f, g, F6 and 8 (or A6L).

The protein resides in the mitochondrion. It localises to the mitochondrion inner membrane. Functionally, mitochondrial membrane ATP synthase (F(1)F(0) ATP synthase or Complex V) produces ATP from ADP in the presence of a proton gradient across the membrane which is generated by electron transport complexes of the respiratory chain. F-type ATPases consist of two structural domains, F(1) - containing the extramembraneous catalytic core and F(0) - containing the membrane proton channel, linked together by a central stalk and a peripheral stalk. During catalysis, ATP synthesis in the catalytic domain of F(1) is coupled via a rotary mechanism of the central stalk subunits to proton translocation. Part of the complex F(0) domain and the peripheric stalk, which acts as a stator to hold the catalytic alpha(3)beta(3) subcomplex and subunit a/ATP6 static relative to the rotary elements. This is ATP synthase-coupling factor 6, mitochondrial from Drosophila melanogaster (Fruit fly).